A 172-amino-acid chain; its full sequence is Centrin-2 (172 aa).

Positions 1 to 30 (MASNFKKANMASSSQRKRMSPKPELTEEQK) are disordered. A2 bears the N-acetylalanine mark. The interval 2–25 (ASNFKKANMASSSQRKRMSPKPEL) is required for self-assembly. A Phosphoserine modification is found at S20. K22 participates in a covalent cross-link: Glycyl lysine isopeptide (Lys-Gly) (interchain with G-Cter in SUMO2). At T26 the chain carries Phosphothreonine. EF-hand domains follow at residues 28 to 63 (EQKQEIREAFDLFDADGTGTIDVKELKVAMRALGFE), 64 to 99 (PKKEEIKKMISEIDKEGTGKMNFGDFLTVMTQKMSE), 101 to 136 (DTKEEILKAFKLFDDDETGKISFKNLKRVAKELGEN), and 137 to 172 (LTDEELQEMIDEADRDGDGEVSEQEFLRIMKKTSLY). D41, D43, T45, T47, and E52 together coordinate Ca(2+). The Ca(2+) site is built by D150, D152, D154, E156, and E161.

This sequence belongs to the centrin family. In terms of assembly, monomer. Homooligomer. Interacts with SFI1. Interacts with CCP110. Component of the XPC complex composed of XPC, RAD23B and CETN2. Component of the nuclear pore complex (NPC)-associated TREX-2 complex (transcription and export complex 2), composed of at least GANP, 2 copies of ENY2, PCID2, SEM1/DSS1, and either centrin CETN2 or centrin CETN3. The TREX-2 complex also associates with ALYREF/ALY and with the nucleoporin NUP153. Interacts with USP49. Forms a microtubule-associated complex with POC5, POC1B and FAM161A. Interacts with CCDC15.

The protein localises to the cytoplasm. Its subcellular location is the cytoskeleton. It is found in the microtubule organizing center. It localises to the centrosome. The protein resides in the centriole. The protein localises to the nucleus envelope. Its subcellular location is the nucleus. It is found in the nuclear pore complex. Functionally, plays a fundamental role in microtubule organizing center structure and function. Required for centriole duplication and correct spindle formation. Has a role in regulating cytokinesis and genome stability via cooperation with CALM1 and CCP110. Its function is as follows. Involved in global genome nucleotide excision repair (GG-NER) by acting as component of the XPC complex. Cooperatively with RAD23B appears to stabilize XPC. In vitro, stimulates DNA binding of the XPC:RAD23B dimer. In terms of biological role, the XPC complex is proposed to represent the first factor bound at the sites of DNA damage and together with other core recognition factors, XPA, RPA and the TFIIH complex, is part of the pre-incision (or initial recognition) complex. The XPC complex recognizes a wide spectrum of damaged DNA characterized by distortions of the DNA helix such as single-stranded loops, mismatched bubbles or single-stranded overhangs. The orientation of XPC complex binding appears to be crucial for inducing a productive NER. XPC complex is proposed to recognize and to interact with unpaired bases on the undamaged DNA strand which is followed by recruitment of the TFIIH complex and subsequent scanning for lesions in the opposite strand in a 5'-to-3' direction by the NER machinery. Cyclobutane pyrimidine dimers (CPDs) which are formed upon UV-induced DNA damage esacpe detection by the XPC complex due to a low degree of structural perurbation. Instead they are detected by the UV-DDB complex which in turn recruits and cooperates with the XPC complex in the respective DNA repair. As a component of the TREX-2 complex, involved in the export of mRNAs to the cytoplasm through the nuclear pores. The sequence is that of Centrin-2 (CETN2) from Homo sapiens (Human).